The chain runs to 146 residues: Hemoglobin subunit beta (146 aa).

The Globin domain maps to 2-146 (EWTDFERATI…VVNSLGRQYH (145 aa)). Heme b-binding residues include His-63 and His-92.

Belongs to the globin family. Heterotetramer of two alpha chains and two beta chains. Can form polymers. In terms of tissue distribution, red blood cells.

Its function is as follows. Involved in oxygen transport from gills to the various peripheral tissues. This Chelidonichthys kumu (Bluefin gurnard) protein is Hemoglobin subunit beta (hbb).